Here is a 343-residue protein sequence, read N- to C-terminus: Isopentenyl-diphosphate delta-isomerase (343 aa).

9-10 (RK) is a substrate binding site. FMN contacts are provided by residues serine 67, 68–70 (AMT), serine 98, and asparagine 127. Residue 98–100 (SQR) coordinates substrate. Substrate is bound at residue glutamine 162. Glutamate 163 is a Mg(2+) binding site. Residues lysine 194, threonine 224, 273–275 (GVR), and 294–295 (AA) contribute to the FMN site.

The protein belongs to the IPP isomerase type 2 family. In terms of assembly, homooctamer. Dimer of tetramers. Requires FMN as cofactor. NADPH is required as a cofactor. It depends on Mg(2+) as a cofactor.

It is found in the cytoplasm. It carries out the reaction isopentenyl diphosphate = dimethylallyl diphosphate. Involved in the biosynthesis of isoprenoids. Catalyzes the 1,3-allylic rearrangement of the homoallylic substrate isopentenyl (IPP) to its allylic isomer, dimethylallyl diphosphate (DMAPP). In Xanthobacter autotrophicus (strain ATCC BAA-1158 / Py2), this protein is Isopentenyl-diphosphate delta-isomerase.